The following is a 1072-amino-acid chain: DNA-directed RNA polymerase subunit beta (1072 aa).

It belongs to the RNA polymerase beta chain family. As to quaternary structure, in plastids the minimal PEP RNA polymerase catalytic core is composed of four subunits: alpha, beta, beta', and beta''. When a (nuclear-encoded) sigma factor is associated with the core the holoenzyme is formed, which can initiate transcription.

The protein resides in the plastid. Its subcellular location is the chloroplast. It carries out the reaction RNA(n) + a ribonucleoside 5'-triphosphate = RNA(n+1) + diphosphate. Functionally, DNA-dependent RNA polymerase catalyzes the transcription of DNA into RNA using the four ribonucleoside triphosphates as substrates. The chain is DNA-directed RNA polymerase subunit beta from Arabidopsis thaliana (Mouse-ear cress).